A 163-amino-acid chain; its full sequence is MPASVLPLVEAAAHWPARGALVGLDLGTKTIGVAVSDPDRRLATGVETIRRKTFTADAARLLAIAGERRAEGFILGLPINMDGSEGPRAQSTRAFARNLARLTDFAIGLWDERLSTAAVERELIGLDMSRARRAKVIDEHAAIFILQGALDRLATQRRTSGPG.

The protein belongs to the YqgF nuclease family.

It is found in the cytoplasm. Could be a nuclease involved in processing of the 5'-end of pre-16S rRNA. This chain is Putative pre-16S rRNA nuclease, found in Nitrobacter winogradskyi (strain ATCC 25391 / DSM 10237 / CIP 104748 / NCIMB 11846 / Nb-255).